We begin with the raw amino-acid sequence, 228 residues long: NOI-like protein (228 aa).

A compositionally biased stretch (basic and acidic residues) spans 56–75 (AQDHQHSEKHHNDTSTDYHV). Disordered stretches follow at residues 56-87 (AQDH…HRRE) and 99-133 (RPHR…RNSD). Basic residues predominate over residues 76-86 (VKQHRRKHHRR). A compositionally biased stretch (polar residues) spans 118 to 133 (HGTSATMSSSVKRNSD).

Belongs to the RIN4 family.

In Elaeis oleifera (American oil palm), this protein is NOI-like protein.